Here is a 453-residue protein sequence, read N- to C-terminus: Bifunctional protein GlmU (453 aa).

The interval M1–R231 is pyrophosphorylase. UDP-N-acetyl-alpha-D-glucosamine is bound by residues L10 to G13, K24, Q77, G82 to T83, Y105 to D107, G143, E157, N172, and N229. D107 contacts Mg(2+). A Mg(2+)-binding site is contributed by N229. Positions A232 to A252 are linker. The interval G253–A453 is N-acetyltransferase. UDP-N-acetyl-alpha-D-glucosamine is bound by residues R318 and K336. H348 acts as the Proton acceptor in catalysis. Residues Y351 and N362 each coordinate UDP-N-acetyl-alpha-D-glucosamine. Acetyl-CoA contacts are provided by residues A365, N371 to Y372, S390, S408, and R425.

It in the N-terminal section; belongs to the N-acetylglucosamine-1-phosphate uridyltransferase family. In the C-terminal section; belongs to the transferase hexapeptide repeat family. In terms of assembly, homotrimer. Mg(2+) serves as cofactor.

Its subcellular location is the cytoplasm. It catalyses the reaction alpha-D-glucosamine 1-phosphate + acetyl-CoA = N-acetyl-alpha-D-glucosamine 1-phosphate + CoA + H(+). The catalysed reaction is N-acetyl-alpha-D-glucosamine 1-phosphate + UTP + H(+) = UDP-N-acetyl-alpha-D-glucosamine + diphosphate. The protein operates within nucleotide-sugar biosynthesis; UDP-N-acetyl-alpha-D-glucosamine biosynthesis; N-acetyl-alpha-D-glucosamine 1-phosphate from alpha-D-glucosamine 6-phosphate (route II): step 2/2. Its pathway is nucleotide-sugar biosynthesis; UDP-N-acetyl-alpha-D-glucosamine biosynthesis; UDP-N-acetyl-alpha-D-glucosamine from N-acetyl-alpha-D-glucosamine 1-phosphate: step 1/1. It functions in the pathway bacterial outer membrane biogenesis; LPS lipid A biosynthesis. Its function is as follows. Catalyzes the last two sequential reactions in the de novo biosynthetic pathway for UDP-N-acetylglucosamine (UDP-GlcNAc). The C-terminal domain catalyzes the transfer of acetyl group from acetyl coenzyme A to glucosamine-1-phosphate (GlcN-1-P) to produce N-acetylglucosamine-1-phosphate (GlcNAc-1-P), which is converted into UDP-GlcNAc by the transfer of uridine 5-monophosphate (from uridine 5-triphosphate), a reaction catalyzed by the N-terminal domain. The protein is Bifunctional protein GlmU of Rhizobium etli (strain ATCC 51251 / DSM 11541 / JCM 21823 / NBRC 15573 / CFN 42).